The chain runs to 928 residues: MORC family CW-type zinc finger protein 4 (928 aa).

A CW-type zinc finger spans residues 417–469 (RIPDQTWVQCDECLKWRRLPGMVDPSTLPARWFCYYNPHPKFKRCSVPEEQER). Zn(2+)-binding residues include cysteine 426, cysteine 429, cysteine 450, and cysteine 461. Disordered regions lie at residues 474–510 (LHRSKAKQQVEAAEKKQKPMESDKYQVFSNPPKTPPL), 527–546 (NSPSLLPSVREESRSPPRLK), 599–649 (AYPE…DQDQ), and 718–766 (RAES…LKRT). The span at 485–497 (AAEKKQKPMESDK) shows a compositional bias: basic and acidic residues. Composition is skewed to basic and acidic residues over residues 626–636 (ESNKHTEENRE), 739–748 (KGKDCQDSRS), and 756–766 (TPKESEELKRT). Residues 758–867 (KESEELKRTT…LEVLQKAQVS (110 aa)) are a coiled coil.

It localises to the nucleus. In terms of biological role, histone methylation reader which binds to non-methylated (H3K4me0), monomethylated (H3K4me1), dimethylated (H3K4me2) and trimethylated (H3K4me3) 'Lys-4' on histone H3. The order of binding preference is H3K4me3 &gt; H3K4me2 &gt; H3K4me1 &gt; H3K4me0. This Mus musculus (Mouse) protein is MORC family CW-type zinc finger protein 4 (Morc4).